The sequence spans 608 residues: MDYKALGLKTGLEIHIQLNTQRKLFCHCPPVLRDDEPHFRVERRLHISVSELGAVDPAVVWEVRKRRKYIYEGYRDTTCLVELDEEPPHLPDEEALVTAVAVAKMFNAKLFDEIYVMRKTVVDGSNVSGFQRTMLIAYGGRAKILGYDIGVETIALEEDAARKISEEGKAMVYRLDRLGIPLIEIATEPMAYTPQEVEEVAWIIGYSVKITGRAKRGVGTVRQDVNVSIAGGAKTEIKGVPDLSLIPKVIEYEAVRQVNLLKIAEELKRRGVGRVELSVADVTAAFANTKSRLVRKVLDSGGRVLALKTPGFQKLLGFEIQPGRRFGSELADYVRAWTELGGLLHSDELPGYGITAEEVREVANRLGVESFILLMGVEESELLEAAQVVVERLNMAPKGVPEETRAANPDGTTRFLRPRPGAARMYPETDLPPVKITFEIMKRAEEVAKINLDAKFKELISLGLSKDLALQLIKSPHLEKFEEYLDKFRSVPPQLIASILLNISKALAREGVEIDGAKIESVLDALNRRVITKEAVEEILRNMRPGESAEEVARRLGLVRLPYEEVKKIVEEVSRQTAKEKIIGEVMRRYRGRVDIEDVKRALAEIAS.

Belongs to the GatB/GatE family. GatE subfamily. As to quaternary structure, heterodimer of GatD and GatE.

It catalyses the reaction L-glutamyl-tRNA(Gln) + L-glutamine + ATP + H2O = L-glutaminyl-tRNA(Gln) + L-glutamate + ADP + phosphate + H(+). Functionally, allows the formation of correctly charged Gln-tRNA(Gln) through the transamidation of misacylated Glu-tRNA(Gln) in organisms which lack glutaminyl-tRNA synthetase. The reaction takes place in the presence of glutamine and ATP through an activated gamma-phospho-Glu-tRNA(Gln). The GatDE system is specific for glutamate and does not act on aspartate. In Pyrobaculum aerophilum (strain ATCC 51768 / DSM 7523 / JCM 9630 / CIP 104966 / NBRC 100827 / IM2), this protein is Glutamyl-tRNA(Gln) amidotransferase subunit E.